Consider the following 172-residue polypeptide: Protein-export protein SecB (172 aa).

Positions 152-172 are disordered; sequence AQGAEGGNSGIVMPDGSQARH.

It belongs to the SecB family. As to quaternary structure, homotetramer, a dimer of dimers. One homotetramer interacts with 1 SecA dimer.

It localises to the cytoplasm. Its function is as follows. One of the proteins required for the normal export of preproteins out of the cell cytoplasm. It is a molecular chaperone that binds to a subset of precursor proteins, maintaining them in a translocation-competent state. It also specifically binds to its receptor SecA. This Cupriavidus taiwanensis (strain DSM 17343 / BCRC 17206 / CCUG 44338 / CIP 107171 / LMG 19424 / R1) (Ralstonia taiwanensis (strain LMG 19424)) protein is Protein-export protein SecB.